The chain runs to 129 residues: MAFITEIANEAQWKTEVLETPGTLQVVEVFQSWCGPCKAVQSTFKKLYFDLNDRPLKFYSVSSERLSSLKEYVGKCKPIFLFFKDGKQVEKIEGVKAPQLNRIVTELSGKNPPPAAPAAAPAAPAAEAS.

Residues 2–109 enclose the Thioredoxin domain; that stretch reads AFITEIANEA…LNRIVTELSG (108 aa). A disulfide bridge connects residues Cys34 and Cys37. Residues 107–129 form a disordered region; sequence LSGKNPPPAAPAAAPAAPAAEAS. A compositionally biased stretch (low complexity) spans 117-129; sequence PAAAPAAPAAEAS.

In terms of assembly, consists of at least 3 heavy chains (alpha, beta and gamma), 2 intermediate chains and 8 light chains.

It is found in the cell projection. Its subcellular location is the cilium. It localises to the flagellum. The protein localises to the cytoplasm. The protein resides in the cytoskeleton. It is found in the flagellum axoneme. In terms of biological role, may be involved in regulating the redox state of functionally important thiol groups within dynein. The polypeptide is Dynein 14 kDa light chain, flagellar outer arm (Chlamydomonas reinhardtii (Chlamydomonas smithii)).